Here is a 609-residue protein sequence, read N- to C-terminus: Albumin (609 aa).

Positions 1 to 18 are cleaved as a signal peptide; sequence MKWVTFISLLFLFSSAYS. A propeptide spanning residues 19–24 is cleaved from the precursor; that stretch reads RGVFRR. 3 Albumin domains span residues 19 to 210, 211 to 403, and 404 to 601; these read RGVF…DELR, DEGK…EFKP, and LVEE…KLVA. Histidine 27 is a Cu cation binding site. Phosphoserine; by FAM20C is present on serine 29. Ca(2+) is bound at residue glutamate 30. An N-linked (Glc) (glycation) lysine glycan is attached at lysine 36. Aspartate 37 serves as a coordination point for Ca(2+). Residue lysine 75 is glycosylated (N-linked (Glc) (glycation) lysine; in vitro). Cysteine 77 and cysteine 86 are oxidised to a cystine. Serine 82 and serine 89 each carry phosphoserine; by FAM20C. Histidine 91 contacts Zn(2+). Cystine bridges form between cysteine 99–cysteine 115, cysteine 114–cysteine 125, cysteine 148–cysteine 193, and cysteine 192–cysteine 201. A Phosphothreonine; by FAM20C modification is found at threonine 107. Residues lysine 161 and lysine 186 are each glycosylated (N-linked (Glc) (glycation) lysine; in vitro). An N-linked (Glc) (glycation) lysine; in vitro glycan is attached at lysine 223. Intrachain disulfides connect cysteine 224-cysteine 270 and cysteine 269-cysteine 277. Lysine 229 carries the N6-succinyllysine modification. Lysine 249 is a glycosylation site (N-linked (Glc) (glycation) lysine; in vitro). Lysine 257 is a glycosylation site (N-linked (Glc) (glycation) lysine). (4Z,15Z)-bilirubin IXalpha is bound at residue lysine 264. Residue glutamate 268 participates in Ca(2+) binding. Residues histidine 271 and aspartate 273 each contribute to the Zn(2+) site. Ca(2+) is bound by residues aspartate 273, glutamate 276, aspartate 279, and aspartate 283. 2 cysteine pairs are disulfide-bonded: cysteine 289-cysteine 303 and cysteine 302-cysteine 313. Phosphoserine is present on serine 297. N-linked (Glc) (glycation) lysine; in vitro glycosylation occurs at lysine 300. Lysine 305 carries an N-linked (Glc) (glycation) lysine glycan. The N-linked (Glc) (glycation) lysine; in vitro glycan is linked to lysine 337. 2 disulfides stabilise this stretch: cysteine 340/cysteine 385 and cysteine 384/cysteine 393. Residue lysine 341 is glycosylated (N-linked (Glc) (glycation) lysine). Asparagine 342 is a glycosylation site (N-linked (GlcNAc...) asparagine; in variant Redhill). A glycan (N-linked (Glc) (glycation) lysine; in vitro) is linked at lysine 347. Lysine 375 carries N-linked (Glc) (glycation) lysine glycosylation. N-linked (Glc) (glycation) lysine; in vitro glycosylation is found at lysine 402 and lysine 437. Cystine bridges form between cysteine 416–cysteine 462, cysteine 461–cysteine 472, cysteine 485–cysteine 501, and cysteine 500–cysteine 511. Serine 443 carries the phosphoserine modification. Residues threonine 444 and threonine 446 each carry the phosphothreonine modification. At lysine 460 the chain carries N6-succinyllysine. N-linked (Glc) (glycation) lysine glycosylation occurs at lysine 463. N-linked (Glc) (glycation) lysine; in vitro glycosylation occurs at lysine 468. Position 513 is a phosphoserine (serine 513). A glycan (N-linked (GlcNAc...) asparagine; in variant Casebrook) is linked at aspartate 518. 2 disulfide bridges follow: cysteine 538/cysteine 583 and cysteine 582/cysteine 591. Lysine 543 is subject to N6-succinyllysine. A glycan (N-linked (Glc) (glycation) lysine) is linked at lysine 549. At lysine 558 the chain carries N6-methyllysine; alternate. Lysine 558 carries N-linked (Glc) (glycation) lysine; alternate glycosylation. Lysine 560 and lysine 569 each carry an N-linked (Glc) (glycation) lysine; in vitro glycan. N6-succinyllysine is present on lysine 588. Residue lysine 597 is glycosylated (N-linked (Glc) (glycation) lysine; in vitro).

It belongs to the ALB/AFP/VDB family. As to quaternary structure, interacts with FCGRT; this interaction regulates ALB homeostasis. Interacts with TASOR. In plasma, occurs in a covalently-linked complex with chromophore-bound alpha-1-microglobulin with molar ratio 1:2 and 1:1; this interaction does not prevent fatty acid binding to ALB. Post-translationally, kenitra variant is partially O-glycosylated at Thr-620. It has two new disulfide bonds Cys-600 to Cys-602 and Cys-601 to Cys-606. In terms of processing, glycated in diabetic patients. Phosphorylated by FAM20C in the extracellular medium. Post-translationally, acetylated on Lys-223 by acetylsalicylic acid. Plasma.

It is found in the secreted. Binds water, Ca(2+), Na(+), K(+), fatty acids, hormones, bilirubin and drugs. Its main function is the regulation of the colloidal osmotic pressure of blood. Major zinc transporter in plasma, typically binds about 80% of all plasma zinc. Major calcium and magnesium transporter in plasma, binds approximately 45% of circulating calcium and magnesium in plasma. Potentially has more than two calcium-binding sites and might additionally bind calcium in a non-specific manner. The shared binding site between zinc and calcium at residue Asp-273 suggests a crosstalk between zinc and calcium transport in the blood. The rank order of affinity is zinc &gt; calcium &gt; magnesium. Binds to the bacterial siderophore enterobactin and inhibits enterobactin-mediated iron uptake of E.coli from ferric transferrin, and may thereby limit the utilization of iron and growth of enteric bacteria such as E.coli. Does not prevent iron uptake by the bacterial siderophore aerobactin. The protein is Albumin (ALB) of Homo sapiens (Human).